Here is a 345-residue protein sequence, read N- to C-terminus: Isopentenyl-diphosphate delta-isomerase (345 aa).

14–15 (RK) provides a ligand contact to substrate. Residues Ser71, 72–74 (SMT), Ser102, and Asn130 each bind FMN. 102 to 104 (SMR) serves as a coordination point for substrate. Residue Gln165 participates in substrate binding. Glu166 contacts Mg(2+). FMN is bound by residues Lys197, Thr227, 277 to 279 (GLK), and 298 to 299 (AG).

It belongs to the IPP isomerase type 2 family. As to quaternary structure, homooctamer. Dimer of tetramers. FMN serves as cofactor. The cofactor is NADPH. It depends on Mg(2+) as a cofactor.

The protein resides in the cytoplasm. It catalyses the reaction isopentenyl diphosphate = dimethylallyl diphosphate. Functionally, involved in the biosynthesis of isoprenoids. Catalyzes the 1,3-allylic rearrangement of the homoallylic substrate isopentenyl (IPP) to its allylic isomer, dimethylallyl diphosphate (DMAPP). In Rickettsia felis (strain ATCC VR-1525 / URRWXCal2) (Rickettsia azadi), this protein is Isopentenyl-diphosphate delta-isomerase.